Reading from the N-terminus, the 107-residue chain is Large ribosomal subunit protein uL24 (107 aa).

Belongs to the universal ribosomal protein uL24 family. Part of the 50S ribosomal subunit.

In terms of biological role, one of two assembly initiator proteins, it binds directly to the 5'-end of the 23S rRNA, where it nucleates assembly of the 50S subunit. Its function is as follows. One of the proteins that surrounds the polypeptide exit tunnel on the outside of the subunit. This Thermotoga neapolitana (strain ATCC 49049 / DSM 4359 / NBRC 107923 / NS-E) protein is Large ribosomal subunit protein uL24.